We begin with the raw amino-acid sequence, 589 residues long: MAAADGDDSLYPIAVLIDELRNEDVQLRLNSIKKLSTIALALGVERTRSELLPFLTDTIYDEDEVLLALAEQLGTFTTLVGGPEYVHCLLPPLESLATVEETVVRDKAVESLRAISHEHSPSDLEAHFVPLVKRLAGGDWFTSRTSACGLFSVCYPRVSSAVKAELRQYFRNLCSDDTPMVRRAAASKLGEFAKVLELDNVKSEIIPMFSNLASDEQDSVRLLAVEACVNIAQLLPQEDLEALVMPTLRQAAEDKSWRVRYMVADKFTELHKAVGPEITKTDLVPAFQNLMKDCEAEVRAAASHKVKEFCENLSADCRENVIMTQILPCIKELVSDANQHVKSALASVIMGLSPILGKDSTIEHLLPLFLAQLKDECPEVRLNIISNLDCVNEVIGIRQLSQSLLPAIVELAEDAKWRVRLAIIEYMPLLAGQLGVEFFDEKLNSLCMAWLVDHVYAIREAATSNLKKLVEKFGKEWAHATIIPKVLAMSGDPNYLHRMTTLFCINVLSEVCGQDITTKHMLPTVLRMAGDPVANVRFNVAKSLQKIGPILDNSTLQSEVKPVLEKLTQDQDVDVKYFAQEALTVLSLA.

Alanine 2 carries the post-translational modification N-acetylalanine. HEAT repeat units follow at residues 8 to 46 (DSLYPIAVLIDELRNEDVQLRLNSIKKLSTIALALGVER), 47 to 84 (TRSELLPFLTDTIYDEDEVLLALAEQLGTFTTLVGGPE), 85 to 123 (YVHCLLPPLESLATVEETVVRDKAVESLRAISHEHSPSD), 124 to 161 (LEAHFVPLVKRLAGGDWFTSRTSACGLFSVCYPRVSSA), 162 to 200 (VKAELRQYFRNLCSDDTPMVRRAAASKLGEFAKVLELDN), 201 to 239 (VKSEIIPMFSNLASDEQDSVRLLAVEACVNIAQLLPQED), 240 to 278 (LEALVMPTLRQAAEDKSWRVRYMVADKFTELHKAVGPEI), 279 to 321 (TKTD…RENV), 322 to 360 (IMTQILPCIKELVSDANQHVKSALASVIMGLSPILGKDS), 361 to 399 (TIEHLLPLFLAQLKDECPEVRLNIISNLDCVNEVIGIRQ), 400 to 438 (LSQSLLPAIVELAEDAKWRVRLAIIEYMPLLAGQLGVEF), 439 to 477 (FDEKLNSLCMAWLVDHVYAIREAATSNLKKLVEKFGKEW), 478 to 516 (AHATIIPKVLAMSGDPNYLHRMTTLFCINVLSEVCGQDI), 517 to 555 (TTKHMLPTVLRMAGDPVANVRFNVAKSLQKIGPILDNST), and 556 to 589 (LQSEVKPVLEKLTQDQDVDVKYFAQEALTVLSLA). The interval 8–399 (DSLYPIAVLI…CVNEVIGIRQ (392 aa)) is PP2A subunit B binding. Residues 47 to 321 (TRSELLPFLT…NLSADCRENV (275 aa)) are polyoma small and medium T antigens Binding. The interval 85-239 (YVHCLLPPLE…NIAQLLPQED (155 aa)) is SV40 small T antigen binding. Lysine 280 carries the N6-acetyllysine modification. Positions 400 to 589 (LSQSLLPAIV…QEALTVLSLA (190 aa)) are PP2A subunit C binding.

This sequence belongs to the phosphatase 2A regulatory subunit A family. In terms of assembly, PP2A consists of a common heterodimeric core enzyme, composed of PPP2CA a 36 kDa catalytic subunit (subunit C) and PPP2R1A a 65 kDa constant regulatory subunit (PR65 or subunit A), that associates with a variety of regulatory subunits. Proteins that associate with the core dimer include three families of regulatory subunits B (the R2/B/PR55/B55, R3/B''/PR72/PR130/PR59 and R5/B'/B56 families), the 48 kDa variable regulatory subunit, viral proteins, and cell signaling molecules. Found in a complex with at least ARL2, PPP2CB, PPP2R1A, PPP2R2A, PPP2R5E and TBCD. Interacts with the PP2A C catalytic subunit PPP2CA. Interacts with the PP2A B subunit PPP2R2A. Interacts with the PP2A B subunit PPP2R5D. Interacts with FOXO1; the interaction dephosphorylates FOXO1 on AKT-mediated phosphorylation sites. Interacts with IPO9. Interacts with TP53 and SGO1. Interacts with PLA2G16; this interaction might decrease PP2A activity. Interacts with CTTNBP2NL. Interacts with GNA12; the interaction promotes protein phosphatase 2A activation causing dephosphorylation of MAPT. Interacts with CIP2A; this interaction stabilizes CIP2A. Interacts with PABIR1/FAM122A. Interacts with ADCY8; antagonizes interaction between ADCY8 and calmodulin. Interacts with CRTC3 (when phosphorylated at 'Ser-391'). Interacts with SPRY2. Part of the core of STRIPAK complexes composed of PP2A catalytic and scaffolding subunits, the striatins (PP2A regulatory subunits), the striatin-associated proteins MOB4, STRIP1 and STRIP2, PDCD10 and members of the STE20 kinases, such as STK24 and STK26. Component of the Integrator-PP2A (INTAC) complex, composed of the Integrator core complex and protein phosphatase 2A subunits PPP2CA and PPP2R1A.

It localises to the cytoplasm. Its subcellular location is the nucleus. It is found in the chromosome. The protein localises to the centromere. The protein resides in the lateral cell membrane. It localises to the cell projection. Its subcellular location is the dendrite. Its function is as follows. The PR65 subunit of protein phosphatase 2A serves as a scaffolding molecule to coordinate the assembly of the catalytic subunit and a variable regulatory B subunit. Upon interaction with GNA12 promotes dephosphorylation of microtubule associated protein TAU/MAPT. Required for proper chromosome segregation and for centromeric localization of SGO1 in mitosis. Together with RACK1 adapter, mediates dephosphorylation of AKT1 at 'Ser-473', preventing AKT1 activation and AKT-mTOR signaling pathway. Dephosphorylation of AKT1 is essential for regulatory T-cells (Treg) homeostasis and stability. Part of the striatin-interacting phosphatase and kinase (STRIPAK) complexes. STRIPAK complexes have critical roles in protein (de)phosphorylation and are regulators of multiple signaling pathways including Hippo, MAPK, nuclear receptor and cytoskeleton remodeling. Different types of STRIPAK complexes are involved in a variety of biological processes such as cell growth, differentiation, apoptosis, metabolism and immune regulation. Key mediator of a quality checkpoint during transcription elongation as part of the Integrator-PP2A (INTAC) complex. The INTAC complex drives premature transcription termination of transcripts that are unfavorably configured for transcriptional elongation: within the INTAC complex, acts as a scaffolding subunit for PPP2CA, which catalyzes dephosphorylation of the C-terminal domain (CTD) of Pol II subunit POLR2A/RPB1 and SUPT5H/SPT5, thereby preventing transcriptional elongation. Regulates the recruitment of the SKA complex to kinetochores. This is Serine/threonine-protein phosphatase 2A 65 kDa regulatory subunit A alpha isoform (PPP2R1A) from Bos taurus (Bovine).